The following is a 268-amino-acid chain: ELL-associated factor 1 (268 aa).

The interval 106–268 (IQVKKTRAEG…LSESGSDSDD (163 aa)) is disordered. A compositionally biased stretch (pro residues) spans 128–154 (ARPPQPSQPPPPPPPMPFRAPTKPPAG). Serine 165 is modified (phosphoserine). Over residues 171–181 (DDIKRELRAEV) the composition is skewed to basic and acidic residues. Residues 182–262 (DIIEQMSSSS…LRNDLQLSES (81 aa)) form a necessary for transactivation activity region. Residues 188-203 (SSSSGSSSSDSESSSG) are compositionally biased toward low complexity. Positions 238 to 268 (NGTSRPQGSSQLMNTLRNDLQLSESGSDSDD) are enriched in polar residues.

This sequence belongs to the EAF family. Component of the super elongation complex (SEC), at least composed of EAF1, EAF2, CDK9, MLLT3/AF9, AFF (AFF1 or AFF4), the P-TEFb complex and ELL (ELL, ELL2 or ELL3). Interacts with ELL and ELL2.

The protein resides in the nucleus speckle. It localises to the nucleus. The protein localises to the cajal body. Acts as a transcriptional transactivator of ELL and ELL2 elongation activities. In Mus musculus (Mouse), this protein is ELL-associated factor 1 (Eaf1).